The chain runs to 430 residues: Putative membrane fusion protein SilB (430 aa).

An N-terminal signal peptide occupies residues 1–28 (MASLKIKYAAIIISSLIAGGLISVTAWQ). The tract at residues 407-430 (RHPEKTENSMPAMSEQPVNMHSGH) is disordered. Residues 414–430 (NSMPAMSEQPVNMHSGH) show a composition bias toward polar residues.

It belongs to the membrane fusion protein (MFP) (TC 8.A.1) family.

Its function is as follows. Component of the sil cation efflux system that confers resistance to silver. May be part of a three-component cation/proton antiporter. The protein is Putative membrane fusion protein SilB (silB) of Salmonella typhimurium.